The following is a 362-amino-acid chain: Quinolone epoxide rearrangement protein penF (362 aa).

His220 is a catalytic residue. The active-site Broensted acid is the Glu222.

The protein belongs to the quinolone epoxide rearrangement protein penF family.

It carries out the reaction [(1'E)-5'-(3',3'-dimethyloxiran-2'-yl)-3'-hydroxy-3'-methylpent-1'-en-1'-yl]-quinolinone B = yaequinolone D. It participates in secondary metabolite biosynthesis. Its pathway is alkaloid biosynthesis. The protein operates within mycotoxin biosynthesis. Its function is as follows. Quinolone epoxide rearrangement protein; part of the gene cluster that mediates the biosynthesis of penigequinolones, potent insecticidal alkaloids that contain a highly modified 10-carbon prenyl group. The first stage is catalyzed by the nonribosomal peptide synthetase penN that condenses anthranilic acid and O-methyl-L-tyrosine to produce 4'-methoxycyclopeptin. 4'-methoxycyclopeptin is then converted to 4'-methoxydehydrocyclopeptin by the ketoglutarate-dependent dioxygenase penM through dehydrogenation to form a double bond between C-alpha and C-beta of the O-methyltyrosine side chain. PenM also converts its first product methoxydehydrocyclopeptin to 4'-methoxycyclopenin. The following conversion of 4'methoxycyclopenin into 4'-methoxyviridicatin is catalyzed by the cyclopenase penL. 4'-methoxyviridicatin is the precursor of quinolone natural products, and is further converted to quinolinone B. The prenyltransferase penI then catalyzes the canonical Friedel-Crafts alkylation of quinolinone B with dimethylallyl cation to yield dimethylallyl quinolone, which is subjected to FAD-dependent dehydrogenation by the FAD-linked oxidoreductase penH to yield conjugated aryl diene. The delta(3') double bond then serves as the site of the second alkylation with DMAPP catalyzed by the prenyltransferase penG to yield a carbenium ion intermediate, which can be attacked by H(2)O to yield a styrenyl quinolone containing a C3'-hydroxyprenyl chain, or undergo cyclization to yield yaequinolones J1 and J2. The conversion of the styrenyl quinolone into the tetrahydrofuran-containing yaequinolone C is performed by the FAD-dependent monooxygenase penE and involves epoxidation of the terminal C7'-C8' olefin, followed by epoxide ring opening initiated by the C3' hydroxyl group. The predicted cysteine hydrolase penJ acts as an epoxide hydrolase that enhances the rate of the 5-exo-tet cyclization step, increasing the yield of yaequinolone C. PenF catalyzes the cationic rearrangement of the epoxide formed by penE (before ring opening to produce yaequinolone C) into yaequinolone D. Finally, the short-chain dehydrogenase/reductase (SDR)-like reductase penD, catalyzes both the dehydration of yaequinolone D and the reduction of the resulting oxonium to yield penigequinolone. The chain is Quinolone epoxide rearrangement protein penF from Penicillium thymicola.